Here is a 116-residue protein sequence, read N- to C-terminus: Cell division protein FtsL (116 aa).

The Cytoplasmic segment spans residues 1–24 (MMLTNRQIRVRLFESLKNSFFKKT). A helical transmembrane segment spans residues 25 to 45 (VGISFALLFILLITAFSLIVV). Residues 46 to 116 (RFEYKLQLNE…NEQKEELNNE (71 aa)) lie on the Periplasmic side of the membrane.

The protein belongs to the FtsL family. As to quaternary structure, part of a complex composed of FtsB, FtsL and FtsQ.

It localises to the cell inner membrane. In terms of biological role, essential cell division protein. May link together the upstream cell division proteins, which are predominantly cytoplasmic, with the downstream cell division proteins, which are predominantly periplasmic. This Francisella tularensis subsp. tularensis (strain SCHU S4 / Schu 4) protein is Cell division protein FtsL.